The sequence spans 261 residues: Syntaxin-7 (261 aa).

The residue at position 2 (S2) is an N-acetylserine. Topologically, residues 2 to 238 (SYTPGVGGDP…DYQRKSRKTL (237 aa)) are cytoplasmic. Phosphothreonine is present on T4. S45 is modified (phosphoserine). A coiled-coil region spans residues 47-69 (ELRQQLQQKQQYTNQLAKETDKY). S75 bears the Phosphoserine mark. A Phosphothreonine modification is found at T79. 4 positions are modified to phosphoserine: S125, S126, S129, and S205. The segment at 129 to 148 (SGSFPEDSSKERNLVSWESQ) is disordered. In terms of domain architecture, t-SNARE coiled-coil homology spans 165-227 (LRLIHERESS…QQANQQLSRA (63 aa)). The chain crosses the membrane as a helical; Anchor for type IV membrane protein span at residues 239–259 (CIIILILVIGVAIISLIIWGL). Over 260-261 (NH) the chain is Vesicular.

This sequence belongs to the syntaxin family. In terms of assembly, forms a SNARE complex with VTI1B, STX8 and VAMP8 which functions in the homotypic fusion of late endosomes. Component of the SNARE complex composed of STX7, STX8, VAMP7 and VTI1B that is required for heterotypic fusion of late endosomes with lysosomes. Interacts with VPS11, VPS16 and VPS18. Interacts with VPS33A. Interacts with TPC1. In terms of tissue distribution, highest expression is found in placenta followed by heart, skeletal muscle, kidney and brain. Low expression is found in pancreas, lung and liver.

It localises to the early endosome membrane. May be involved in protein trafficking from the plasma membrane to the early endosome (EE) as well as in homotypic fusion of endocytic organelles. Mediates the endocytic trafficking from early endosomes to late endosomes and lysosomes. The sequence is that of Syntaxin-7 (STX7) from Homo sapiens (Human).